A 764-amino-acid polypeptide reads, in one-letter code: MGSNLSPQLCLMPFILGLLSGGVTTTPWSLARPQGSCSLEGVEIKGGSFRLLQEGQALEYVCPSGFYPYPVQTRTCRSTGSWSTLKTQDQKTVRKAECRAIHCPRPHDFENGEYWPRSPYYNVSDEISFHCYDGYTLRGSANRTCQVNGRWSGQTAICDNGAGYCSNPGIPIGTRKVGSQYRLEDSVTYHCSRGLTLRGSQRRTCQEGGSWSGTEPSCQDSFMYDTPQEVAEAFLSSLTETIEGVDAEDGHGPGEQQKRKIVLDPSGSMNIYLVLDGSDSIGASNFTGAKKCLVNLIEKVASYGVKPRYGLVTYATYPKIWVKVSDPDSSNADWVTKQLNEINYEDHKLKSGTNTKKALQAVYSMMSWPDDVPPEGWNRTRHVIILMTDGLHNMGGDPITVIDEIRDLLYIGKDHKNPREDYLDVYVFGVGPLVNQVNINALASKKDNEQHVFKVKDMENLEDVFYQMIDESQSLSLCGMVWEHRKGTDYHKQPWQAKISVIRPSKGHESCMGAVVSEYFVLTAAHCFTVDDKEHSIKVSVGGEKRDLEIEVVLFHPNYNINGKKEAGIPEFYDYDVALIKLKNKLKYGQTIRPICLPCTEGTTRALRLPPTTTCQQQKEELLPAQDIKALFVSEEEKKLTRKEVYIKNGDKKGSCERDAQYAPGYDKVKDISEVVTPRFLCTGGVSPYADPNTCRGDSGGPLIVHKRSRFIQVGVISWGVVDVCKNQKRQKQVPAHARDFHINLFQVLPWLKEKLQDEDLGFL.

Positions 1–25 (MGSNLSPQLCLMPFILGLLSGGVTT) are cleaved as a signal peptide. 3 Sushi domains span residues 35 to 100 (GSCS…ECRA), 101 to 160 (IHCP…ICDN), and 163 to 220 (GYCS…SCQD). Cystine bridges form between cysteine 37/cysteine 76, cysteine 62/cysteine 98, cysteine 103/cysteine 145, cysteine 131/cysteine 158, cysteine 165/cysteine 205, and cysteine 191/cysteine 218. Residues asparagine 122 and asparagine 142 are each glycosylated (N-linked (GlcNAc...) asparagine). Residues 270-469 (NIYLVLDGSD…NLEDVFYQMI (200 aa)) enclose the VWFA domain. Mg(2+) contacts are provided by serine 278 and serine 280. N-linked (GlcNAc...) asparagine glycosylation is present at asparagine 285. Threonine 353 provides a ligand contact to Mg(2+). Asparagine 378 carries an N-linked (GlcNAc...) asparagine glycan. The 281-residue stretch at 477–757 (LCGMVWEHRK…VLPWLKEKLQ (281 aa)) folds into the Peptidase S1 domain. Disulfide bonds link cysteine 478–cysteine 596, cysteine 511–cysteine 527, cysteine 599–cysteine 615, cysteine 656–cysteine 682, and cysteine 695–cysteine 725. Catalysis depends on charge relay system residues histidine 526 and aspartate 576. Residue serine 699 is the Charge relay system of the active site.

Belongs to the peptidase S1 family. In terms of assembly, monomer. Interacts with complement C3b; this interaction is dependent on the presence of Mg(2+). As to quaternary structure, catalytic component of the C3 convertase of the alternative complement pathway, also named C3bBb, composed of complement factor B Bb and complement C3b. Catalytic component of the C5 convertase of the alternative complement pathway, also named C3bBb3b, composed of complement factor B Bb and additional molecules of complement C3b. Interacts to CFP; this interaction contributes to the stabilization of the active C3-convertase enzyme complex. Mg(2+) is required as a cofactor. It depends on Mn(2+) as a cofactor. In terms of processing, cleaved by CFD following activation of the alternative complement system, generating Ba and Bb chains. Cleavage and activation takes place when CFB is already associated with complement C3b.

The protein resides in the secreted. Its subcellular location is the cell surface. It carries out the reaction Cleavage of Arg-|-Ser bond in complement component C3 alpha-chain to yield C3a and C3b, and Arg-|-Xaa bond in complement component C5 alpha-chain to yield C5a and C5b.. Precursor of the catalytic component of the C3 and C5 convertase complexes of the alternative pathway of the complement system, a cascade of proteins that leads to phagocytosis and breakdown of pathogens and signaling that strengthens the adaptive immune system. The alternative complement pathway acts as an amplification loop that enhances other complement pathways (classical, lectin and GZMK) by promoting formation of additional C3 and C5 convertases. CFB is cleaved and activated by CFD to generate Ba and Bb chains; Bb chain constituting the catalytic component of the C3 and C5 convertases. In terms of biological role, serine protease component of the complement C3 and C5 convertase complexes of the alternative complement pathway. Following cleavage and activation by factor D (CFD), forms the C3 convertase together with complement C3b. As part of the C3 convertase, cleaves and activates C3 into C3a anaphylatoxin and C3b opsonin, the next components of the complement pathways. When an additional complement C3b molecule binds to the C3 convertase, forms the C5 convertase, which cleaves and activates C5 into C5a anaphylatoxin and C5b component of the membrane attack complex. Its function is as follows. Involved in proliferation and differentiation of preactivated B-lymphocytes, rapid spreading of peripheral blood monocytes, stimulation of lymphocyte blastogenesis and lysis of erythrocytes. In Gorilla gorilla gorilla (Western lowland gorilla), this protein is Complement factor B (CFB).